A 425-amino-acid chain; its full sequence is cAMP/cGMP-dependent 3',5'-cAMP/cGMP phosphodiesterase 7 (425 aa).

Positions 1-17 (MKYLILILIFFIEINNG) are cleaved as a signal peptide.

Belongs to the cyclic nucleotide phosphodiesterase class-II family.

The protein resides in the secreted. Its subcellular location is the extracellular space. It localises to the cell surface. The catalysed reaction is 3',5'-cyclic AMP + H2O = AMP + H(+). The enzyme catalyses 3',5'-cyclic GMP + H2O = GMP + H(+). Inhibited by dithiotreitol (DTT). Its function is as follows. Phosphodiesterase with dual cAMP/cGMP specificity. However, displays a preference for cAMP over cGMP. Seems to regulate cAMP/cGMP concentration especially during cell aggregation. The sequence is that of cAMP/cGMP-dependent 3',5'-cAMP/cGMP phosphodiesterase 7 (pde7) from Dictyostelium discoideum (Social amoeba).